We begin with the raw amino-acid sequence, 1208 residues long: DNA-directed RNA polymerase subunit beta (1208 aa).

The tract at residues 1182–1208 (EKKAAEQVEDEKDDVIQNFETAEDNLD) is disordered.

This sequence belongs to the RNA polymerase beta chain family. The RNAP catalytic core consists of 2 alpha, 1 beta, 1 beta' and 1 omega subunit. When a sigma factor is associated with the core the holoenzyme is formed, which can initiate transcription.

The enzyme catalyses RNA(n) + a ribonucleoside 5'-triphosphate = RNA(n+1) + diphosphate. Functionally, DNA-dependent RNA polymerase catalyzes the transcription of DNA into RNA using the four ribonucleoside triphosphates as substrates. In Enterococcus faecium (Streptococcus faecium), this protein is DNA-directed RNA polymerase subunit beta.